The following is a 355-amino-acid chain: Tyrosine recombinase XerC (355 aa).

Positions 4-89 (TQFDGDIDSF…AVRGFFAWAY (86 aa)) constitute a Core-binding (CB) domain. Residues 138–180 (DDGGAAAASGSGKAAGKTADKSADTVNRSEAPARADKRDNARV) form a disordered region. Positions 141–154 (GAAAASGSGKAAGK) are enriched in low complexity. Residues 158-349 (KSADTVNRSE…SIEQLKNRYG (192 aa)) form the Tyr recombinase domain. Positions 168–178 (APARADKRDNA) are enriched in basic and acidic residues. Catalysis depends on residues Arg200, Lys224, His301, Arg304, and His327. Tyr336 functions as the O-(3'-phospho-DNA)-tyrosine intermediate in the catalytic mechanism.

It belongs to the 'phage' integrase family. XerC subfamily. In terms of assembly, forms a cyclic heterotetrameric complex composed of two molecules of XerC and two molecules of XerD.

Its subcellular location is the cytoplasm. Site-specific tyrosine recombinase, which acts by catalyzing the cutting and rejoining of the recombining DNA molecules. The XerC-XerD complex is essential to convert dimers of the bacterial chromosome into monomers to permit their segregation at cell division. It also contributes to the segregational stability of plasmids. The protein is Tyrosine recombinase XerC of Bifidobacterium longum subsp. infantis (strain ATCC 15697 / DSM 20088 / JCM 1222 / NCTC 11817 / S12).